A 76-amino-acid chain; its full sequence is Tautomerase PptA (76 aa).

Catalysis depends on P2, which acts as the Proton acceptor; via imino nitrogen.

This sequence belongs to the 4-oxalocrotonate tautomerase family. PptA subfamily. Homodimer.

It localises to the cytoplasm. In Cronobacter sakazakii (strain ATCC BAA-894) (Enterobacter sakazakii), this protein is Tautomerase PptA.